The sequence spans 317 residues: Lipoyl synthase (317 aa).

The tract at residues 1 to 22 (MVTVVNTLNRPRHPEKQNRPET) is disordered. A compositionally biased stretch (basic and acidic residues) spans 12–22 (RHPEKQNRPET). 7 residues coordinate [4Fe-4S] cluster: C57, C62, C68, C83, C87, C90, and S296. The Radical SAM core domain occupies 69 to 285 (WEKKHATFMI…ETVAYAKGFL (217 aa)).

It belongs to the radical SAM superfamily. Lipoyl synthase family. It depends on [4Fe-4S] cluster as a cofactor.

Its subcellular location is the cytoplasm. It carries out the reaction [[Fe-S] cluster scaffold protein carrying a second [4Fe-4S](2+) cluster] + N(6)-octanoyl-L-lysyl-[protein] + 2 oxidized [2Fe-2S]-[ferredoxin] + 2 S-adenosyl-L-methionine + 4 H(+) = [[Fe-S] cluster scaffold protein] + N(6)-[(R)-dihydrolipoyl]-L-lysyl-[protein] + 4 Fe(3+) + 2 hydrogen sulfide + 2 5'-deoxyadenosine + 2 L-methionine + 2 reduced [2Fe-2S]-[ferredoxin]. It functions in the pathway protein modification; protein lipoylation via endogenous pathway; protein N(6)-(lipoyl)lysine from octanoyl-[acyl-carrier-protein]: step 2/2. Its function is as follows. Catalyzes the radical-mediated insertion of two sulfur atoms into the C-6 and C-8 positions of the octanoyl moiety bound to the lipoyl domains of lipoate-dependent enzymes, thereby converting the octanoylated domains into lipoylated derivatives. This Azorhizobium caulinodans (strain ATCC 43989 / DSM 5975 / JCM 20966 / LMG 6465 / NBRC 14845 / NCIMB 13405 / ORS 571) protein is Lipoyl synthase.